Here is a 314-residue protein sequence, read N- to C-terminus: MIEIEKPKIETVELSEDAKYGKFVVEPLERGYGTTLGNSLRRILLSSLPGAAVTSVQIDGVLHEFSTIEGVVEDVTAIILNVKKLALKIYSDEEKTLEIDVQGEGVVTAADITHDSDVEILNPDLHIATLAEGGRLRMRMTARRGRGYVPAEANKREDQPIGVIPIDSIYTPVSRVSYQVENTRVGQVTDYDKLTIDVWTDGSIGPKEAISLGAKILTEHLNIFVGLTDEAQNAEIMVEKEDDQKEKVLEMTIEELDLSVRSYNCLKRAGINTVQELTQKTEEDMMKVRNLGRKSLEEVKAKLAELGLSLRKDD.

The segment at 1–228 (MIEIEKPKIE…EHLNIFVGLT (228 aa)) is alpha N-terminal domain (alpha-NTD). The tract at residues 245–314 (KEKVLEMTIE…ELGLSLRKDD (70 aa)) is alpha C-terminal domain (alpha-CTD).

Belongs to the RNA polymerase alpha chain family. Homodimer. The RNAP catalytic core consists of 2 alpha, 1 beta, 1 beta' and 1 omega subunit. When a sigma factor is associated with the core the holoenzyme is formed, which can initiate transcription.

The enzyme catalyses RNA(n) + a ribonucleoside 5'-triphosphate = RNA(n+1) + diphosphate. DNA-dependent RNA polymerase catalyzes the transcription of DNA into RNA using the four ribonucleoside triphosphates as substrates. In Geobacillus thermodenitrificans (strain NG80-2), this protein is DNA-directed RNA polymerase subunit alpha.